The primary structure comprises 637 residues: MSEVESREKEPDAGLSPDIVQATLPFLSSDDIKNLSQTNKYYNTLLDFDHSKILWHELFHKAFGTLKTNDEPFQGRNSAEFKTCTETILREAFPTLSWQEVYQLRAYDAKFYSWGYLKHGRLGYTASSNNELVATSLNGPSPRFKYGVNTPTEVPWFNSRTTSRTSNFTPSEDPLSAIKKDGDEIIAQVSSGGFSFQILTESGNLYSSGSTFSGGLKGPGPSGSQHDYNPFREMIHNMERSYPRITSRSNGSTVNTTGTFSGRRMSGSHPSTAYEPGNATTAQHITIDSGGAPAASPGGSHSGVPRTTMPSMGPHENIYSQIEMLERSANKAVPGNNHIRRMFARNSFPLYSGRDENLGSFNDIQFVAVSSGRSHFLAMDTDNNIYSWDSTESDQGVKIEFANLPSRATNPILKIASGWNFNCCYIYKVGLVAWKERDAIQKGESFAFAKYEIVPNTNDVNGDSRIVDFACLQDNCVFFINNNGDKLWKYHNGLNQIVDLNIVGKLCKINACFASLVLFTDTHCYTLKVTNGDVDKDSLTELDINENVISVASGDYHTVALTERGHLYSWGIESQDCGCLGLGPSEKIVNELHIGNWEGQRNIRVVKPTKIELPEDYICVSVTAGGWQTGALIIKKH.

One can recognise an F-box domain in the interval 14 to 63; sequence GLSPDIVQATLPFLSSDDIKNLSQTNKYYNTLLDFDHSKILWHELFHKAF. Residue Ser16 is modified to Phosphoserine. The stretch at 109 to 202 is one RCC1 1 repeat; it reads AKFYSWGYLK…GFSFQILTES (94 aa). The interval 242–315 is disordered; the sequence is YPRITSRSNG…RTTMPSMGPH (74 aa). Positions 244–260 are enriched in polar residues; it reads RITSRSNGSTVNTTGTF. Residue Ser266 is modified to Phosphoserine. Low complexity predominate over residues 289-305; it reads SGGAPAASPGGSHSGVP. The stretch at 565–635 is one RCC1 2 repeat; it reads GHLYSWGIES…GWQTGALIIK (71 aa).

As to quaternary structure, interacts with AAH1, SKP1 and CDC53. Component of the SCF(SAF1) complex containing CDC53, SKP1, HRT1 and SAF1.

It participates in protein modification; protein ubiquitination. In terms of biological role, substrate recognition component of a SCF (SKP1-CUL1-F-box protein) E3 ubiquitin-protein ligase complex which mediates the ubiquitination and subsequent proteasomal degradation of target proteins. Targets AAH1 adenine deaminase for proteasome-dependent degradation upon entry into quiescence. Targets also URA7. In Saccharomyces cerevisiae (strain ATCC 204508 / S288c) (Baker's yeast), this protein is SCF-associated factor 1 (SAF1).